The chain runs to 210 residues: Large ribosomal subunit protein uL3 (210 aa).

This sequence belongs to the universal ribosomal protein uL3 family. In terms of assembly, part of the 50S ribosomal subunit. Forms a cluster with proteins L14 and L19.

Its function is as follows. One of the primary rRNA binding proteins, it binds directly near the 3'-end of the 23S rRNA, where it nucleates assembly of the 50S subunit. The polypeptide is Large ribosomal subunit protein uL3 (Syntrophotalea carbinolica (strain DSM 2380 / NBRC 103641 / GraBd1) (Pelobacter carbinolicus)).